The following is a 134-amino-acid chain: Probable 4-amino-4-deoxy-L-arabinose-phosphoundecaprenol flippase subunit ArnF (134 aa).

Residues 1 to 5 are Cytoplasmic-facing; the sequence is MNRRR. Residues 6 to 26 form a helical membrane-spanning segment; the sequence is GILFALASVLLVSVAQLSMRW. The Periplasmic segment spans residues 27 to 45; that stretch reads SMTRLPRPDQWLSVPSVDS. Residues 46-66 form a helical membrane-spanning segment; that stretch reads VALAVVLAAIFAYALSMLCWL. Residues 67–77 are Cytoplasmic-facing; it reads AALRDLPLGRA. Residues 78 to 98 traverse the membrane as a helical segment; sequence YSLLSISYALVYLLAASLPLF. At 99–101 the chain is on the periplasmic side; the sequence is NES. Residues 102–122 traverse the membrane as a helical segment; it reads FSFSKSLGVALVMLGVITINT. Topologically, residues 123–134 are cytoplasmic; the sequence is RPARAPELRSSP.

The protein belongs to the ArnF family. In terms of assembly, heterodimer of ArnE and ArnF.

It is found in the cell inner membrane. Its pathway is bacterial outer membrane biogenesis; lipopolysaccharide biosynthesis. In terms of biological role, translocates 4-amino-4-deoxy-L-arabinose-phosphoundecaprenol (alpha-L-Ara4N-phosphoundecaprenol) from the cytoplasmic to the periplasmic side of the inner membrane. This chain is Probable 4-amino-4-deoxy-L-arabinose-phosphoundecaprenol flippase subunit ArnF, found in Pseudomonas fluorescens (strain Pf0-1).